Consider the following 158-residue polypeptide: Small ribosomal subunit protein uS7 (158 aa).

Belongs to the universal ribosomal protein uS7 family. Part of the 30S ribosomal subunit. Contacts proteins S9 and S11.

Its function is as follows. One of the primary rRNA binding proteins, it binds directly to 16S rRNA where it nucleates assembly of the head domain of the 30S subunit. Is located at the subunit interface close to the decoding center, probably blocks exit of the E-site tRNA. The chain is Small ribosomal subunit protein uS7 from Porphyromonas gingivalis (strain ATCC 33277 / DSM 20709 / CIP 103683 / JCM 12257 / NCTC 11834 / 2561).